We begin with the raw amino-acid sequence, 320 residues long: Histidine decarboxylase proenzyme (320 aa).

The propeptide occupies 2-11 (NKNLEANRNR). S98 carries the pyruvic acid (Ser) modification. Residue E215 is the Proton donor of the active site.

The proenzyme is a hexamer of identical pi chains; each pi chain monomer is cleaved to form a small (or beta) chain and a large (or alpha) chain by non-hydrolytic self-catalysis. Pyruvate serves as cofactor.

It carries out the reaction L-histidine + H(+) = histamine + CO2. The sequence is that of Histidine decarboxylase proenzyme (hdc) from Clostridium perfringens (strain 13 / Type A).